The following is a 364-amino-acid chain: Peroxidase (364 aa).

The signal sequence occupies residues 1 to 20 (MKLSLFSTFAAVIIGALALP). Glutamine 21 carries the post-translational modification Pyrrolidone carboxylic acid. Disulfide bonds link cysteine 32/cysteine 44, cysteine 43/cysteine 313, cysteine 63/cysteine 149, and cysteine 277/cysteine 342. The active-site Proton acceptor is the histidine 76. Ca(2+) is bound by residues aspartate 77, glycine 95, aspartate 97, and serine 99. Asparagine 163 carries an N-linked (GlcNAc...) (high mannose) asparagine glycan. Residue histidine 204 participates in heme b binding. The Ca(2+) site is built by serine 205, aspartate 222, threonine 224, valine 227, and aspartate 229.

It belongs to the peroxidase family. Ligninase subfamily. Ca(2+) is required as a cofactor. The cofactor is heme b.

It is found in the secreted. The enzyme catalyses 2 a phenolic donor + H2O2 = 2 a phenolic radical donor + 2 H2O. The polypeptide is Peroxidase (Arthromyces ramosus).